We begin with the raw amino-acid sequence, 125 residues long: Small ribosomal subunit protein uS12 (125 aa).

Asp89 carries the 3-methylthioaspartic acid modification. The interval 106-125 (GVKDRKQSRSKYGAKRPKKA) is disordered. Basic residues predominate over residues 113–125 (SRSKYGAKRPKKA).

This sequence belongs to the universal ribosomal protein uS12 family. As to quaternary structure, part of the 30S ribosomal subunit. Contacts proteins S8 and S17. May interact with IF1 in the 30S initiation complex.

Its function is as follows. With S4 and S5 plays an important role in translational accuracy. Functionally, interacts with and stabilizes bases of the 16S rRNA that are involved in tRNA selection in the A site and with the mRNA backbone. Located at the interface of the 30S and 50S subunits, it traverses the body of the 30S subunit contacting proteins on the other side and probably holding the rRNA structure together. The combined cluster of proteins S8, S12 and S17 appears to hold together the shoulder and platform of the 30S subunit. The sequence is that of Small ribosomal subunit protein uS12 from Azoarcus sp. (strain BH72).